Consider the following 299-residue polypeptide: Probable alpha-L-glutamate ligase (299 aa).

Residues 112-294 (LQLLTEQGIA…IALQMIVHIE (183 aa)) enclose the ATP-grasp domain. Residues Lys148, 185–186 (DF), Asp194, and 218–220 (RAN) each bind ATP. Residues Asp255, Glu267, and Asn269 each coordinate Mg(2+). Residues Asp255, Glu267, and Asn269 each contribute to the Mn(2+) site.

Belongs to the RimK family. Mg(2+) is required as a cofactor. Mn(2+) serves as cofactor.

This chain is Probable alpha-L-glutamate ligase, found in Histophilus somni (strain 129Pt) (Haemophilus somnus).